We begin with the raw amino-acid sequence, 342 residues long: Phosphate acyltransferase (342 aa).

It belongs to the PlsX family. As to quaternary structure, homodimer. Probably interacts with PlsY.

The protein resides in the cytoplasm. It catalyses the reaction a fatty acyl-[ACP] + phosphate = an acyl phosphate + holo-[ACP]. Its pathway is lipid metabolism; phospholipid metabolism. In terms of biological role, catalyzes the reversible formation of acyl-phosphate (acyl-PO(4)) from acyl-[acyl-carrier-protein] (acyl-ACP). This enzyme utilizes acyl-ACP as fatty acyl donor, but not acyl-CoA. This Pelotomaculum thermopropionicum (strain DSM 13744 / JCM 10971 / SI) protein is Phosphate acyltransferase.